The sequence spans 152 residues: Nucleoside diphosphate kinase B (152 aa).

The interaction with AKAP13 stretch occupies residues M1–K66. 6 residues coordinate ATP: K12, F60, R88, T94, R105, and N115. The active-site Pros-phosphohistidine intermediate is the H118.

This sequence belongs to the NDK family. As to quaternary structure, hexamer of two different chains: An and B (A6, A5B, A4B2, A3B3, A2B4, AB5, B6). Interacts with CAPN8. Interacts with AKAP13. Interacts with ITGB1BP1 (via C-terminal domain region). Interacts with BCL2L10. It depends on Mg(2+) as a cofactor. Ubiquitous.

It is found in the cytoplasm. It localises to the cell projection. Its subcellular location is the lamellipodium. The protein localises to the ruffle. The protein resides in the nucleus. The enzyme catalyses a 2'-deoxyribonucleoside 5'-diphosphate + ATP = a 2'-deoxyribonucleoside 5'-triphosphate + ADP. It carries out the reaction a ribonucleoside 5'-diphosphate + ATP = a ribonucleoside 5'-triphosphate + ADP. It catalyses the reaction ATP + protein L-histidine = ADP + protein N-phospho-L-histidine.. Functionally, major role in the synthesis of nucleoside triphosphates other than ATP. The ATP gamma phosphate is transferred to the NDP beta phosphate via a ping-pong mechanism, using a phosphorylated active-site intermediate. Negatively regulates Rho activity by interacting with AKAP13/LBC. Acts as a transcriptional activator of the MYC gene; binds DNA non-specifically. Binds to both single-stranded guanine- and cytosine-rich strands within the nuclease hypersensitive element (NHE) III(1) region of the MYC gene promoter. Does not bind to duplex NHE III(1). Has G-quadruplex (G4) DNA-binding activity, which is independent of its nucleotide-binding and kinase activity. Binds both folded and unfolded G4 with similar low nanomolar affinities. Stabilizes folded G4s regardless of whether they are prefolded or not. Exhibits histidine protein kinase activity. The chain is Nucleoside diphosphate kinase B (NME2) from Canis lupus familiaris (Dog).